A 338-amino-acid polypeptide reads, in one-letter code: Penicillin V acylase (338 aa).

Residues 1–3 (MLG) constitute a propeptide, removed in mature form. The Nucleophile role is filled by Cys-4.

The protein belongs to the peptidase C59 family. Homotetramer. Post-translationally, expressed as an inactive precursor that is cleaved autocatalytically at Gly-3/Cys-4 to generate an active enzyme. Processing exposes a catalytic N-terminal nucleophile residue with a free alpha amino group.

The enzyme catalyses a penicillin + H2O = 6-aminopenicillanate + a carboxylate. With respect to regulation, hydrolase activity is rapidly inhibited by lysine modifying reagents. Its function is as follows. Catalyzes the hydrolysis of penicillin V to 6-aminopenicillanate (6-APA). Exhibits high specificity for penicillin V. Penicillin G and other related compounds are hydrolyzed at less than 10% of the rate of penicillin V. Among the cephalosporins, cephalosporin C is resistant to cleavage, whereas cephalosporin G is cleaved at about 1% of the rate of cleavage of penicillin V. The protein is Penicillin V acylase of Lysinibacillus sphaericus (Bacillus sphaericus).